The following is a 331-amino-acid chain: Putative ankyrin repeat protein RBE_0261 (331 aa).

Residues 94-159 (QGENVIHKCV…KAKNTLLNIV (66 aa)) form an ANK repeat.

This chain is Putative ankyrin repeat protein RBE_0261, found in Rickettsia bellii (strain RML369-C).